Reading from the N-terminus, the 425-residue chain is Histidinol dehydrogenase (425 aa).

NAD(+)-binding residues include tyrosine 124, glutamine 184, and asparagine 207. Substrate is bound by residues serine 230, glutamine 252, and histidine 255. Zn(2+) contacts are provided by glutamine 252 and histidine 255. Active-site proton acceptor residues include glutamate 321 and histidine 322. Substrate is bound by residues histidine 322, aspartate 355, glutamate 409, and histidine 414. Zn(2+) is bound at residue aspartate 355. Residue histidine 414 coordinates Zn(2+).

The protein belongs to the histidinol dehydrogenase family. The cofactor is Zn(2+).

It catalyses the reaction L-histidinol + 2 NAD(+) + H2O = L-histidine + 2 NADH + 3 H(+). It functions in the pathway amino-acid biosynthesis; L-histidine biosynthesis; L-histidine from 5-phospho-alpha-D-ribose 1-diphosphate: step 9/9. Catalyzes the sequential NAD-dependent oxidations of L-histidinol to L-histidinaldehyde and then to L-histidine. The polypeptide is Histidinol dehydrogenase (Halobacterium salinarum (strain ATCC 700922 / JCM 11081 / NRC-1) (Halobacterium halobium)).